Reading from the N-terminus, the 1581-residue chain is Rho guanine nucleotide exchange factor 5 (1581 aa).

Disordered stretches follow at residues 25-54 (EGIM…TDGH), 159-274 (VSKE…EQKQ), 316-643 (LRDS…RDGI), 659-700 (SEEF…PPTV), 741-810 (HSHP…PEFY), and 829-1051 (VPII…GSSD). Basic and acidic residues predominate over residues 41-54 (QEDRDPSYKWTDGH). A compositionally biased stretch (polar residues) spans 204-221 (KQLQLEATQENQGQEGFL). The span at 228-241 (GLEEQEGQEVEIQE) shows a compositional bias: acidic residues. 2 stretches are compositionally biased toward basic and acidic residues: residues 326–336 (QESREVEERRV) and 345–380 (RLVE…DSGD). S446 is subject to Phosphoserine. Positions 474 to 492 (LDNRTHNSQQEEFRLRKGI) are enriched in basic and acidic residues. Positions 496–507 (SASTSVAPSGTR) are enriched in polar residues. The segment covering 515–531 (PNVFSSTATLSPVSSSV) has biased composition (low complexity). 5 stretches are compositionally biased toward polar residues: residues 569-595 (TSDT…NSFP), 603-613 (TPDSLGMSLSF), 662-685 (FTSN…QNSA), 748-760 (TLSS…SKGS), and 779-791 (TPES…TSIP). The segment covering 829 to 843 (VPIIDPSSEPPPLPP) has biased composition (pro residues). Polar residues-rich tracts occupy residues 867 to 881 (PNNQ…SVGR), 889 to 905 (GRST…NNEV), and 912 to 925 (SNMT…SPTT). Phosphoserine occurs at positions 953 and 969. The segment covering 975-986 (KNSEKPLHHQLE) has biased composition (basic and acidic residues). Residues S1029 and S1110 each carry the phosphoserine modification. The DH domain maps to 1158-1342 (KLQEAKFELI…EKLIRDCNSN (185 aa)). The region spanning 1375–1488 (LVKSGELTAL…SALAMPREEL (114 aa)) is the PH domain. The SH3 domain maps to 1494-1555 (YDSPQVQCLR…PVQQVEFISN (62 aa)).

Interacts with SRC. Forms a ternary complex with SRC and the PI3K 85 kDa subunit. Interacts with and is activated by the heterodimer formed by GNB1 and GNG2. Interacts with ODAM (via C-terminus). Interacts with RHOA. Post-translationally, activation of SRC induces tyrosine phosphorylation of ARHGEF5.

The protein resides in the nucleus. The protein localises to the cytoplasm. It localises to the cell projection. Its subcellular location is the podosome. Its function is as follows. Guanine nucleotide exchange factor which activates Rho GTPases. Strongly activates RHOA. Also strongly activates RHOB, weakly activates RHOC and RHOG and shows no effect on RHOD, RHOV, RHOQ or RAC1. Involved in regulation of cell shape and actin cytoskeletal organization. Plays a role in actin organization by generating a loss of actin stress fibers and the formation of membrane ruffles and filopodia. Required for SRC-induced podosome formation. Involved in positive regulation of immature dendritic cell migration. This chain is Rho guanine nucleotide exchange factor 5, found in Mus musculus (Mouse).